Consider the following 586-residue polypeptide: MRFKSAYNGILTKDDIGKEVKLAGWVLRRRDHGGVIFVDLRDRTGFVQIVFNPEISKEAHNDAQDLRSEYVISVEGKIRARSPEMINPKIPTGEIEVMVEKMELLNTSETPPFLLEDDIDTGEDIRLKYRYLDLRRPTVFNNLYKRFQITNAFRKHLSDNGFIDVETPILNKSTPEGARDFLVPSRLNAGDFYALPQSPQIFKQILMIGGFDRYYQIAKCFRDEDLRADRQPEFTQVDIETSFLNTDEFLSIMENVTANIVKDVYGIDLPTPFPRLNYYDAMEMYGSDKPDTRFELKLINVEDAVRGCDFAVFKNALDNKFIIRCLNAKGGEKLSRKDIDDFTKYVGIFGAKGLAWMRVTDKGLESNIVKFFSEENQKKILEVTKAEKGDLLFFVADTPKVTFDALGNLRLRVAEKLNLIDKDKLNFLWVVEFPLFEYDHKEKRISATHHPFTAPVPEDVAILESEPLKVRSDTYDLVLNGNEIGGGGQRIYDSKVQAIIFKLLGIDEEKAKLRFGFLLDALKYGAPPMCGMAYGIDRVVMLLQKQDSIREVIAFPKTQKGQCLMSGCPSTVDADQLEELHLSIEE.

Glu-176 provides a ligand contact to L-aspartate. The interval 200–203 is aspartate; sequence QIFK. Arg-222 contacts L-aspartate. Residues 222–224 and Gln-231 contribute to the ATP site; that span reads RDE. His-449 provides a ligand contact to L-aspartate. Glu-483 contributes to the ATP binding site. Arg-490 contacts L-aspartate. An ATP-binding site is contributed by 535–538; the sequence is GIDR.

This sequence belongs to the class-II aminoacyl-tRNA synthetase family. Type 1 subfamily. Homodimer.

The protein localises to the cytoplasm. It carries out the reaction tRNA(Asx) + L-aspartate + ATP = L-aspartyl-tRNA(Asx) + AMP + diphosphate. Aspartyl-tRNA synthetase with relaxed tRNA specificity since it is able to aspartylate not only its cognate tRNA(Asp) but also tRNA(Asn). Reaction proceeds in two steps: L-aspartate is first activated by ATP to form Asp-AMP and then transferred to the acceptor end of tRNA(Asp/Asn). The polypeptide is Aspartate--tRNA(Asp/Asn) ligase (Brachyspira hyodysenteriae (strain ATCC 49526 / WA1)).